Consider the following 179-residue polypeptide: NADH dehydrogenase [ubiquinone] 1 beta subcomplex subunit 9 (179 aa).

Alanine 2 carries the N-acetylalanine modification. Serine 85 is subject to Phosphoserine.

The protein belongs to the complex I LYR family. In terms of assembly, mammalian complex I is composed of 45 different subunits.

The protein localises to the mitochondrion inner membrane. Accessory subunit of the mitochondrial membrane respiratory chain NADH dehydrogenase (Complex I), that is believed to be not involved in catalysis. Complex I functions in the transfer of electrons from NADH to the respiratory chain. The immediate electron acceptor for the enzyme is believed to be ubiquinone. The protein is NADH dehydrogenase [ubiquinone] 1 beta subcomplex subunit 9 (Ndufb9) of Mus musculus (Mouse).